Consider the following 248-residue polypeptide: MKIQCDVCEKAPATVICCADEAALCPQCDIEIHAANKLASKHQRLHLNSLSTKFPRCDICQEKAAFIFCVEDRALLCRDCDESIHVANSRSANHQRFLATGIKVALTSTICSKEIEKNQPEPSNNQQKANQIPAKSTSQQQQQPSSATPLPWAVDDFFHFSDIESTDKKGQLDLGAGELDWFSDMGFFGDQINDKALPAAEVPELSVSHLGHVHSYKPMKSNVSHKKPRFETRYDDDDEEHFIVPDLG.

Positions 5, 8, 28, 33, 57, 60, 80, and 85 each coordinate Zn(2+). The segment at Cys5–Leu47 adopts a B box-type 1; atypical zinc-finger fold. Residues Cys57–Ala99 form a B box-type 2; atypical zinc finger. The interval Ile115–Thr148 is disordered. Residues Pro120–Asn130 show a composition bias toward polar residues. Low complexity predominate over residues Gln131–Thr148. A Nuclear localization signal motif is present at residues Lys226–Arg229. The tract at residues Asp236–Gly248 is interaction with COP1.

In terms of assembly, interacts with COP1 WD40 domain. Interacts with HY5 and HYH. Interacts with RCD1 and TRP4. COP1-mediated ubiquitination and subsequent proteasomal degradation of BBX24/STO occurs in the dark. In terms of tissue distribution, high expression in leaves and lower in roots and flowers.

It is found in the nucleus. Functionally, acts as a negative regulator of seedling photomorphogenesis and light-regulated inhibition of hypocotyl elongation. BBX24/STO and BBX25/STH function as transcriptional corepressors of HY5 activity, leading to the down-regulation of BBX22 expression. BBX24/STO acts additively with BBX25/STH during de-etiolation and the hypocotyl shade avoidance response. Functions as a negative regulator of photomorphogenic UV-B responses by interacting with both COP1 and HY5. May act as a transcription factor in the salt-stress response. In Arabidopsis thaliana (Mouse-ear cress), this protein is B-box zinc finger protein 24.